A 466-amino-acid polypeptide reads, in one-letter code: tRNA-2-methylthio-N(6)-dimethylallyladenosine synthase (466 aa).

Positions 22-139 (RRYYVWTVGC…VVALAPNPIY (118 aa)) constitute an MTTase N-terminal domain. The [4Fe-4S] cluster site is built by Cys31, Cys67, Cys101, Cys166, Cys170, and Cys173. Positions 152 to 386 (SHPPVSVHVP…EQLQEQIATE (235 aa)) constitute a Radical SAM core domain. One can recognise a TRAM domain in the interval 389–449 (ARFLGQTVEV…PWSLQGVPQL (61 aa)).

It belongs to the methylthiotransferase family. MiaB subfamily. In terms of assembly, monomer. It depends on [4Fe-4S] cluster as a cofactor.

The protein localises to the cytoplasm. It catalyses the reaction N(6)-dimethylallyladenosine(37) in tRNA + (sulfur carrier)-SH + AH2 + 2 S-adenosyl-L-methionine = 2-methylsulfanyl-N(6)-dimethylallyladenosine(37) in tRNA + (sulfur carrier)-H + 5'-deoxyadenosine + L-methionine + A + S-adenosyl-L-homocysteine + 2 H(+). Its function is as follows. Catalyzes the methylthiolation of N6-(dimethylallyl)adenosine (i(6)A), leading to the formation of 2-methylthio-N6-(dimethylallyl)adenosine (ms(2)i(6)A) at position 37 in tRNAs that read codons beginning with uridine. The polypeptide is tRNA-2-methylthio-N(6)-dimethylallyladenosine synthase (Chloroflexus aurantiacus (strain ATCC 29366 / DSM 635 / J-10-fl)).